Reading from the N-terminus, the 318-residue chain is UDP-N-acetylenolpyruvoylglucosamine reductase (318 aa).

Positions 38–204 constitute an FAD-binding PCMH-type domain; it reads IGGICPVVVE…LGIEILLKEG (167 aa). Arg182 is a catalytic residue. The interval 212–232 is disordered; the sequence is SLKDKRDRRNSSQPENKKSAG. The segment covering 213-229 has biased composition (basic and acidic residues); sequence LKDKRDRRNSSQPENKK. The Proton donor role is filled by Ser233. Glu310 is a catalytic residue.

The protein belongs to the MurB family. FAD is required as a cofactor.

The protein resides in the cytoplasm. The enzyme catalyses UDP-N-acetyl-alpha-D-muramate + NADP(+) = UDP-N-acetyl-3-O-(1-carboxyvinyl)-alpha-D-glucosamine + NADPH + H(+). Its pathway is cell wall biogenesis; peptidoglycan biosynthesis. Functionally, cell wall formation. The polypeptide is UDP-N-acetylenolpyruvoylglucosamine reductase (Leptospira borgpetersenii serovar Hardjo-bovis (strain L550)).